The following is a 1070-amino-acid chain: DNA-directed RNA polymerase subunit beta (1070 aa).

The protein belongs to the RNA polymerase beta chain family. As to quaternary structure, in plastids the minimal PEP RNA polymerase catalytic core is composed of four subunits: alpha, beta, beta', and beta''. When a (nuclear-encoded) sigma factor is associated with the core the holoenzyme is formed, which can initiate transcription.

The protein localises to the plastid. It localises to the chloroplast. It catalyses the reaction RNA(n) + a ribonucleoside 5'-triphosphate = RNA(n+1) + diphosphate. Functionally, DNA-dependent RNA polymerase catalyzes the transcription of DNA into RNA using the four ribonucleoside triphosphates as substrates. This is DNA-directed RNA polymerase subunit beta from Phaseolus vulgaris (Kidney bean).